Reading from the N-terminus, the 304-residue chain is Murein tetrapeptide carboxypeptidase (304 aa).

Serine 106 serves as the catalytic Nucleophile. Catalysis depends on charge relay system residues glutamate 200 and histidine 270.

It belongs to the peptidase S66 family.

It is found in the cytoplasm. The catalysed reaction is N-acetyl-D-glucosaminyl-N-acetylmuramoyl-L-alanyl-meso-2,6-diaminoheptanedioyl-D-alanine + H2O = N-acetyl-D-glucosaminyl-N-acetylmuramoyl-L-alanyl-meso-2,6-diaminoheptanedioate + D-alanine. Its pathway is cell wall biogenesis; peptidoglycan recycling. In terms of biological role, releases the terminal D-alanine residue from the cytoplasmic tetrapeptide recycling product L-Ala-gamma-D-Glu-meso-Dap-D-Ala. Can also cleave D-Ala from murein derivatives containing the tetrapeptide, i.e. MurNAc-tetrapeptide, UDP-MurNAc-tetrapeptide, GlcNAc-MurNAc-tetrapeptide, and GlcNAc-anhMurNAc-tetrapeptide. Does not act on murein sacculi or cross-linked muropeptides. The tripeptides produced by the LcdA reaction can then be reused as peptidoglycan building blocks; LcdA is thereby involved in murein recycling. In Escherichia coli O157:H7, this protein is Murein tetrapeptide carboxypeptidase (ldcA).